The primary structure comprises 360 residues: Vitopine synthase (360 aa).

Belongs to the lysopine/nopaline/octopine/opine/vitopine dehydrogenases family.

The polypeptide is Vitopine synthase (vis) (Allorhizobium ampelinum (strain ATCC BAA-846 / DSM 112012 / S4) (Agrobacterium vitis (strain S4))).